We begin with the raw amino-acid sequence, 482 residues long: Putative fatty acid desaturase 2-like protein FADS2B (482 aa).

The interval 1–31 is disordered; it reads MKFEEKCGDNGSIVGRNQSYPGEKHQPKGKP. Over 1–167 the chain is Cytoplasmic; the sequence is MKFEEKCGDN…EAMNMFHANL (167 aa). One can recognise a Cytochrome b5 heme-binding domain in the interval 56-132; sequence LSMYTWLEIQ…LKPLLIGELA (77 aa). Positions 90 and 113 each coordinate heme. A helical transmembrane segment spans residues 168-188; it reads GFFFLHFVQILILEVLAWLIV. At 189 to 190 the chain is on the lumenal side; it reads YH. A helical membrane pass occupies residues 191-211; it reads FGSGWPVTMFISFLLTISQAS. Over 212 to 305 the chain is Cytoplasmic; the sequence is SSFLQHDAGH…YEEQHLYFYK (94 aa). The short motif at 217–221 is the Histidine box-1 element; it reads HDAGH. The short motif at 254-258 is the Histidine box-2 element; sequence HFEQH. Residues 306–326 form a helical membrane-spanning segment; the sequence is VWLPLFMPVYLKLPSMQAMYL. Residues 327–343 are Lumenal-facing; sequence QRYWVCFSLQDITWVSS. Residues 344-364 form a helical membrane-spanning segment; sequence FYIYFITFGLYYGIFGTMLLI. The Cytoplasmic segment spans residues 365-482; sequence YLVKFLESPW…AALWADAYYE (118 aa). The Histidine box-3 signature appears at 421–425; sequence QIEHH.

Belongs to the fatty acid desaturase type 1 family.

Its subcellular location is the endoplasmic reticulum membrane. It functions in the pathway lipid metabolism; polyunsaturated fatty acid biosynthesis. The sequence is that of Putative fatty acid desaturase 2-like protein FADS2B from Homo sapiens (Human).